A 226-amino-acid chain; its full sequence is MVCAPWLLAVVVVCVCNPGVGGQCWDSSHCKDLPSEDKILECTHLFRSGLQDESPEPRSAAQQSTEESLSLGILLAALTSGERALDADPEPHSDKRHSYSMEHFRWGKPIGHKRRPIKVYASSLEGGDSSEGTFPLQARRQLGSWEDEMVGALGNQGAKAQTKVVPRTLTVTGLQDKKDGSYRMGHFRWGSPTAIKRYGGFMKPYTKQSHKPLITLLKHITLKNEQ.

The first 22 residues, 1–22, serve as a signal peptide directing secretion; it reads MVCAPWLLAVVVVCVCNPGVGG. A propeptide spanning residues 23-97 is cleaved from the precursor; sequence QCWDSSHCKD…DPEPHSDKRH (75 aa). At Ser-98 the chain carries N-acetylserine; in Corticotropin. Tyr-198 is subject to N-acetyltyrosine; in Beta-endorphin and Met-enkephalin.

The protein belongs to the POMC family. In terms of processing, specific enzymatic cleavages at paired basic residues yield the different active peptides.

Its subcellular location is the secreted. Stimulates the adrenal glands to release cortisol. Functionally, anorexigenic peptide. Increases the pigmentation of skin by increasing melanin production in melanocytes. In terms of biological role, increases the pigmentation of skin by increasing melanin production in melanocytes. Its function is as follows. Endogenous orexigenic opiate. Endogenous opiate. The sequence is that of Pro-opiomelanocortin (pomc) from Oncorhynchus keta (Chum salmon).